A 644-amino-acid chain; its full sequence is Arabinosyltransferase XEG113 (644 aa).

Residues 1–17 are Cytoplasmic-facing; that stretch reads MVEGWRNGFRDATNSKP. The chain crosses the membrane as a helical; Signal-anchor for type II membrane protein span at residues 18–38; sequence LFVTIYATVIIGVLVSSFYVF. Over 39-644 the chain is Lumenal; that stretch reads SAIYSPTNGS…QTPEEDHPPL (606 aa). 2 N-linked (GlcNAc...) asparagine glycosylation sites follow: Asn46 and Asn70. Residues 226-228 carry the DXD motif motif; it reads DTD. N-linked (GlcNAc...) asparagine glycans are attached at residues Asn446 and Asn542.

This sequence belongs to the glycosyltransferase 77 family.

It is found in the golgi apparatus membrane. In terms of biological role, plays a role in the arabinosylation of cell wall components. Involved in the arabinosylation of extensin proteins in root hair cells. Extensins are structural glycoproteins present in cell walls and its arabinosylation is important for cell elongation, root hair cell development, lateral root development and root hair tip growth. The sequence is that of Arabinosyltransferase XEG113 from Arabidopsis thaliana (Mouse-ear cress).